The following is a 196-amino-acid chain: Large ribosomal subunit protein eL15 (196 aa).

Composition is skewed to basic residues over residues 160-172 (ATRG…RKGR) and 186-196 (PSIRAHKSRGK). Positions 160-196 (ATRGKTSAGRKGRGMSTRGKGTEKTRPSIRAHKSRGK) are disordered.

Belongs to the eukaryotic ribosomal protein eL15 family.

This chain is Large ribosomal subunit protein eL15 (rpl15e), found in Methanosarcina mazei (strain ATCC BAA-159 / DSM 3647 / Goe1 / Go1 / JCM 11833 / OCM 88) (Methanosarcina frisia).